A 315-amino-acid polypeptide reads, in one-letter code: MIEMEKPKVEVFEISDDSTYGKFVVEPLERGYGTTLGNSLRRIMLSSLPGAAVTSVKIEGILHEFSTIPGVKEDVTEIILNLKDLSIGIDGNEPKTLRIEMEGPGTVTAGDIIADADVEVLNPDMYIATLDDNSKLNMEINIAKGRGYVSAENNKTAGMPIGVIPVDSIFTPVRKVSYFVGNTRVGQVTDYDKLEIEVFTDGSIKPDEAISLAAKVMSEHLNLFITLKEDVSDVEIMVQKEEDKKEKVLEMTIEELDLSVRSYNCLKRAGINTVEELSLKSEEDMMKVRNLGKKSLEEVDKKLEELGLGLRPSDE.

Residues 1–228 (MIEMEKPKVE…EHLNLFITLK (228 aa)) are alpha N-terminal domain (alpha-NTD). Residues 245-315 (KEKVLEMTIE…LGLGLRPSDE (71 aa)) are alpha C-terminal domain (alpha-CTD).

The protein belongs to the RNA polymerase alpha chain family. Homodimer. The RNAP catalytic core consists of 2 alpha, 1 beta, 1 beta' and 1 omega subunit. When a sigma factor is associated with the core the holoenzyme is formed, which can initiate transcription.

The catalysed reaction is RNA(n) + a ribonucleoside 5'-triphosphate = RNA(n+1) + diphosphate. Its function is as follows. DNA-dependent RNA polymerase catalyzes the transcription of DNA into RNA using the four ribonucleoside triphosphates as substrates. This Alkaliphilus metalliredigens (strain QYMF) protein is DNA-directed RNA polymerase subunit alpha.